Here is a 430-residue protein sequence, read N- to C-terminus: Adenylosuccinate synthetase (430 aa).

Residues 12-18 and 40-42 contribute to the GTP site; these read GDEGKGK and GHT. The active-site Proton acceptor is Asp13. Residues Asp13 and Gly40 each coordinate Mg(2+). IMP-binding positions include 13–16, 38–41, Thr128, Arg142, Gln223, Thr238, and Arg302; these read DEGK and NAGH. The active-site Proton donor is the His41. Residue 298–304 participates in substrate binding; that stretch reads TTTGRPR. Residues Arg304, 330 to 332, and 412 to 414 each bind GTP; these read SID and SVG.

This sequence belongs to the adenylosuccinate synthetase family. Homodimer. Mg(2+) serves as cofactor.

Its subcellular location is the cytoplasm. It carries out the reaction IMP + L-aspartate + GTP = N(6)-(1,2-dicarboxyethyl)-AMP + GDP + phosphate + 2 H(+). Its pathway is purine metabolism; AMP biosynthesis via de novo pathway; AMP from IMP: step 1/2. In terms of biological role, plays an important role in the de novo pathway of purine nucleotide biosynthesis. Catalyzes the first committed step in the biosynthesis of AMP from IMP. In Streptococcus suis (strain 98HAH33), this protein is Adenylosuccinate synthetase.